We begin with the raw amino-acid sequence, 197 residues long: Holliday junction branch migration complex subunit RuvA (197 aa).

Residues 1 to 63 form a domain I region; the sequence is MYAYLKGIIT…EDAHLLYGFR (63 aa). Residues 64 to 142 form a domain II region; that stretch reads SEDEKKLFLS…VAGDDLPAKV (79 aa). Positions 143–147 are flexible linker; it reads AVQAS. A domain III region spans residues 148–197; it reads AENQELEEAMEAMLALGYKATELKKIKKFFEGTTDTAENYIKSALKMLVK.

This sequence belongs to the RuvA family. Homotetramer. Forms an RuvA(8)-RuvB(12)-Holliday junction (HJ) complex. HJ DNA is sandwiched between 2 RuvA tetramers; dsDNA enters through RuvA and exits via RuvB. An RuvB hexamer assembles on each DNA strand where it exits the tetramer. Each RuvB hexamer is contacted by two RuvA subunits (via domain III) on 2 adjacent RuvB subunits; this complex drives branch migration. In the full resolvosome a probable DNA-RuvA(4)-RuvB(12)-RuvC(2) complex forms which resolves the HJ.

It is found in the cytoplasm. Functionally, the RuvA-RuvB-RuvC complex processes Holliday junction (HJ) DNA during genetic recombination and DNA repair, while the RuvA-RuvB complex plays an important role in the rescue of blocked DNA replication forks via replication fork reversal (RFR). RuvA specifically binds to HJ cruciform DNA, conferring on it an open structure. The RuvB hexamer acts as an ATP-dependent pump, pulling dsDNA into and through the RuvAB complex. HJ branch migration allows RuvC to scan DNA until it finds its consensus sequence, where it cleaves and resolves the cruciform DNA. This chain is Holliday junction branch migration complex subunit RuvA, found in Streptococcus pneumoniae serotype 19F (strain G54).